We begin with the raw amino-acid sequence, 192 residues long: Fe/S biogenesis protein NfuA (192 aa).

The [4Fe-4S] cluster site is built by Cys-149 and Cys-152.

It belongs to the NfuA family. As to quaternary structure, homodimer. The cofactor is [4Fe-4S] cluster.

Involved in iron-sulfur cluster biogenesis. Binds a 4Fe-4S cluster, can transfer this cluster to apoproteins, and thereby intervenes in the maturation of Fe/S proteins. Could also act as a scaffold/chaperone for damaged Fe/S proteins. This Shewanella amazonensis (strain ATCC BAA-1098 / SB2B) protein is Fe/S biogenesis protein NfuA.